The sequence spans 965 residues: Aminopeptidase N (965 aa).

Residues 1 to 8 (MAKGFYIS) lie on the Cytoplasmic side of the membrane. A helical; Signal-anchor for type II membrane protein membrane pass occupies residues 9-32 (KALGILAILLGVAAVATIIALSVV). Residues 33–65 (YAQEKNKNAERGTAAPTSPTGPTTTSATTLDQS) form a cytosolic Ser/Thr-rich junction region. Residues 33 to 965 (YAQEKNKNAE…VVLNWFKDHS (933 aa)) are Extracellular-facing. A disordered region spans residues 40–65 (NAERGTAAPTSPTGPTTTSATTLDQS). The segment covering 44–61 (GTAAPTSPTGPTTTSATT) has biased composition (low complexity). Positions 66 to 965 (KPWNRYRLPT…VVLNWFKDHS (900 aa)) are metalloprotease. The N-linked (GlcNAc...) asparagine glycan is linked to Asn125. At Tyr173 the chain carries Sulfotyrosine. Asn231, Asn260, and Asn316 each carry an N-linked (GlcNAc...) asparagine glycan. 349 to 353 (GAMEN) contacts substrate. His385 lines the Zn(2+) pocket. Glu386 serves as the catalytic Proton acceptor. 2 residues coordinate Zn(2+): His389 and Glu408. Residue Tyr416 is modified to Sulfotyrosine. Residues Asn508, Asn569, Asn624, Asn680, Asn734, and Asn738 are each glycosylated (N-linked (GlcNAc...) asparagine). 2 disulfide bridges follow: Cys760-Cys767 and Cys797-Cys833.

This sequence belongs to the peptidase M1 family. In terms of assembly, homodimer. Interacts with SLC6A19. Zn(2+) serves as cofactor. Sulfated. In terms of processing, N- and O-glycosylated. Post-translationally, may undergo proteolysis and give rise to a soluble form.

The protein resides in the cell membrane. The catalysed reaction is Release of an N-terminal amino acid, Xaa-|-Yaa- from a peptide, amide or arylamide. Xaa is preferably Ala, but may be most amino acids including Pro (slow action). When a terminal hydrophobic residue is followed by a prolyl residue, the two may be released as an intact Xaa-Pro dipeptide.. In terms of biological role, broad specificity aminopeptidase which plays a role in the final digestion of peptides generated from hydrolysis of proteins by gastric and pancreatic proteases. Also involved in the processing of various peptides including peptide hormones, such as angiotensin III and IV, neuropeptides, and chemokines. May also be involved the cleavage of peptides bound to major histocompatibility complex class II molecules of antigen presenting cells. May have a role in angiogenesis and promote cholesterol crystallization. May have a role in amino acid transport by acting as binding partner of amino acid transporter SLC6A19 and regulating its activity. The protein is Aminopeptidase N (ANPEP) of Bos taurus (Bovine).